The chain runs to 294 residues: uncharacterized protein (294 aa).

One can recognise a Tyrosine-protein phosphatase domain in the interval 13–151 (QCSQIRPYLY…LIDLEQKLRG (139 aa)). Residue C95 is the Phosphocysteine intermediate of the active site. A disordered region spans residues 234–294 (PTLLVPSSSS…WRLSFHKDVV (61 aa)).

It belongs to the protein-tyrosine phosphatase family. Non-receptor class dual specificity subfamily.

This is an uncharacterized protein from Caenorhabditis elegans.